The primary structure comprises 483 residues: Serine protease HTRA4 (483 aa).

Positions 1–30 (MSFQRLWAVRTQFLLLWLLLPAVPVPWAEA) are cleaved as a signal peptide. One can recognise an IGFBP N-terminal domain in the interval 35–113 (VSLPCPDACD…GAWLGTCGCA (79 aa)). Intrachain disulfides connect C39-C65, C43-C67, C48-C68, C54-C71, C79-C93, and C87-C110. Residues 208–368 (GSGFIVSEDG…IPSDRIRQFL (161 aa)) are serine protease. Residues H224, D254, and S332 each act as charge relay system in the active site. A PDZ domain is found at 379–471 (KAPLQKKYLG…LSIIVLRGSQ (93 aa)).

The protein belongs to the peptidase S1C family.

It localises to the secreted. Serine protease. This chain is Serine protease HTRA4 (Htra4), found in Mus musculus (Mouse).